The sequence spans 350 residues: 2-oxoglutarate-dependent ethylene/succinate-forming enzyme (350 aa).

One can recognise a Fe2OG dioxygenase domain in the interval 166–286 (GWHHMRVLRF…RFACAYFHEP (121 aa)). The Fe cation site is built by H189 and H268.

This sequence belongs to the iron/ascorbate-dependent oxidoreductase family. As to quaternary structure, monomer. Fe(2+) serves as cofactor.

It carries out the reaction 2-oxoglutarate + O2 + 2 H(+) = ethene + 3 CO2 + H2O. The catalysed reaction is L-arginine + 2-oxoglutarate + O2 = guanidine + L-glutamate 5-semialdehyde + succinate + CO2. It participates in alkene biosynthesis; ethylene biosynthesis via 2-oxoglutarate. In terms of biological role, simultaneously catalyzes two reactions, namely formation of ethylene and of succinate from 2-oxoglutarate. The sequence is that of 2-oxoglutarate-dependent ethylene/succinate-forming enzyme (efe) from Pseudomonas amygdali pv. sesami (Pseudomonas syringae pv. sesami).